The chain runs to 154 residues: MSMHPALRLLATVLVALGAGPAFTQDAPRLTGADRPMSEVAAPPLPETITDDRRVGRNYPEQPPVIPHAIEGYQLSVNANRCLECHRRQYSGLVAAPMISITHFQDREGQMLADVSPRRYFCTACHVPQTNAQPLVTNEFRDMLTLTPASNEAE.

Residues 1-24 (MSMHPALRLLATVLVALGAGPAFT) form the signal peptide. The segment at 27 to 47 (APRLTGADRPMSEVAAPPLPE) is disordered. H68, C82, C85, H86, H103, C122, C125, and H126 together coordinate heme c.

This sequence belongs to the NapB family. In terms of assembly, component of the periplasmic nitrate reductase NapAB complex composed of NapA and NapB. In terms of processing, binds 2 heme C groups per subunit.

Its subcellular location is the periplasm. Its function is as follows. Electron transfer subunit of the periplasmic nitrate reductase complex NapAB. Receives electrons from the membrane-anchored tetraheme c-type NapC protein and transfers these to NapA subunit, thus allowing electron flow between membrane and periplasm. Essential for periplasmic nitrate reduction with nitrate as the terminal electron acceptor. The protein is Periplasmic nitrate reductase, electron transfer subunit of Cereibacter sphaeroides (Rhodobacter sphaeroides).